A 500-amino-acid chain; its full sequence is L-arabinose isomerase (500 aa).

Mn(2+) contacts are provided by Glu306, Glu333, His350, and His450.

Belongs to the arabinose isomerase family. As to quaternary structure, homohexamer. The cofactor is Mn(2+).

It carries out the reaction beta-L-arabinopyranose = L-ribulose. Its pathway is carbohydrate degradation; L-arabinose degradation via L-ribulose; D-xylulose 5-phosphate from L-arabinose (bacterial route): step 1/3. In terms of biological role, catalyzes the conversion of L-arabinose to L-ribulose. In Shigella flexneri, this protein is L-arabinose isomerase.